The primary structure comprises 282 residues: TPR repeat protein oca3 (282 aa).

4 TPR repeats span residues 16–50 (IVALFSQQEAYAKLGKYKDEIWDVYQKVFIAALTT), 71–104 (PRVEGLYGMFLEATASEKDAMSYYNSKLSEDPTH), 139–172 (LEAWAELADIYVSVEAFESAIFCYEEMVLLQPFE), and 174–211 (RLFARLGDLYFVLAQSNATNYWFSLKHYCRSVEICEEY).

It localises to the cytoplasm. The protein localises to the nucleus. Its function is as follows. May be involved in cell cycle regulation. This chain is TPR repeat protein oca3 (oca3), found in Schizosaccharomyces pombe (strain 972 / ATCC 24843) (Fission yeast).